The sequence spans 2511 residues: Chromodomain-helicase-DNA-binding protein 8 (2511 aa).

Residues 484 to 615 (PRVLNQDELP…RSNRQVKRKK (132 aa)) are disordered. Positions 515-524 (GGGVGGGGGG) are enriched in gly residues. Positions 604 to 615 (KRRSNRQVKRKK) are enriched in basic residues. Chromo domains follow at residues 680–745 (AIVD…AQMR) and 760–826 (VEVD…RTPR). Residues 859-1033 (LFNWYNRQNC…FSLLHFLEPA (175 aa)) form the Helicase ATP-binding domain. 872–879 (DEMGLGKT) is an ATP binding site. The short motif at 984 to 987 (DEAH) is the DEAH box element. Residues 1174–1330 (LLDKLLPRLK…SMSGNKESSI (157 aa)) form the Helicase C-terminal domain. 4 disordered regions span residues 1440–1482 (TRQF…HSGG), 1715–1736 (EQQA…SEDP), 2086–2168 (SKNN…LTDP), and 2468–2511 (PSAL…SSED). Over residues 1452 to 1461 (DLSDLDSDDD) the composition is skewed to acidic residues. Low complexity predominate over residues 2111-2125 (DSGSSSSSRHSGSSD).

Belongs to the SNF2/RAD54 helicase family. CHD8 subfamily. As to quaternary structure, component of some MLL1/MLL complex.

The protein resides in the nucleus. The catalysed reaction is ATP + H2O = ADP + phosphate + H(+). ATP-dependent chromatin-remodeling factor, it slides nucleosomes along DNA; nucleosome sliding requires ATP. Acts as a transcription repressor by remodeling chromatin structure and recruiting histone H1 to target genes. Suppresses p53/tp53-mediated apoptosis by recruiting histone H1 and preventing p53/tp53 transactivation activity. Acts as a negative regulator of Wnt signaling pathway by regulating beta-catenin (ctnnb1) activity. Negatively regulates ctnnb1-targeted gene expression by being recruited specifically to the promoter regions of several ctnnb1 responsive genes. May also act as a transcription activator by participating in efficient U6 RNA polymerase III transcription. The polypeptide is Chromodomain-helicase-DNA-binding protein 8 (Danio rerio (Zebrafish)).